Reading from the N-terminus, the 201-residue chain is Recombination protein RecR (201 aa).

The C4-type zinc-finger motif lies at 60–75; the sequence is CSCCGNVDTSDPCTIC. One can recognise a Toprim domain in the interval 83–178; the sequence is ATLIVVEDVS…RVTRLAHGVP (96 aa).

Belongs to the RecR family.

In terms of biological role, may play a role in DNA repair. It seems to be involved in an RecBC-independent recombinational process of DNA repair. It may act with RecF and RecO. This Brucella melitensis biotype 1 (strain ATCC 23456 / CCUG 17765 / NCTC 10094 / 16M) protein is Recombination protein RecR.